The sequence spans 123 residues: Small ribosomal subunit protein uS12c (123 aa).

It belongs to the universal ribosomal protein uS12 family. In terms of assembly, part of the 30S ribosomal subunit.

It localises to the plastid. The protein resides in the chloroplast. In terms of biological role, with S4 and S5 plays an important role in translational accuracy. Located at the interface of the 30S and 50S subunits. The polypeptide is Small ribosomal subunit protein uS12c (rps12) (Huperzia lucidula (Shining clubmoss)).